Consider the following 137-residue polypeptide: Large ribosomal subunit protein bL12 (137 aa).

It belongs to the bacterial ribosomal protein bL12 family. Homodimer. Part of the ribosomal stalk of the 50S ribosomal subunit. Forms a multimeric L10(L12)X complex, where L10 forms an elongated spine to which 2 to 4 L12 dimers bind in a sequential fashion. Binds GTP-bound translation factors.

Its function is as follows. Forms part of the ribosomal stalk which helps the ribosome interact with GTP-bound translation factors. Is thus essential for accurate translation. This is Large ribosomal subunit protein bL12 from Gloeobacter violaceus (strain ATCC 29082 / PCC 7421).